A 95-amino-acid polypeptide reads, in one-letter code: Acylphosphatase (95 aa).

The 87-residue stretch at 7–93 (TWQLFAHGRV…QLFDRFDWLP (87 aa)) folds into the Acylphosphatase-like domain. Residues arginine 22 and asparagine 40 contribute to the active site.

It belongs to the acylphosphatase family.

The enzyme catalyses an acyl phosphate + H2O = a carboxylate + phosphate + H(+). This is Acylphosphatase (acyP) from Cupriavidus metallidurans (strain ATCC 43123 / DSM 2839 / NBRC 102507 / CH34) (Ralstonia metallidurans).